Here is a 91-residue protein sequence, read N- to C-terminus: Non-specific lipid-transfer protein 1 (91 aa).

4 disulfide bridges follow: C3/C50, C13/C27, C28/C73, and C48/C87. The a 1,2-diacyl-sn-glycero-3-phosphocholine site is built by R44 and Y79.

As to quaternary structure, monomer.

In terms of biological role, plant non-specific lipid-transfer proteins transfer phospholipids as well as galactolipids across membranes. May play a role in wax or cutin deposition in the cell walls of expanding epidermal cells and certain secretory tissues. Has antifungal activity against F.solani, F.oxysporum, P.aphanidermatum and S.rolfsii. Has antibacterial activity against the Gram-positive bacterium S.aureus but not against the Gram-negative bacterium S.typhimurium. This is Non-specific lipid-transfer protein 1 from Vigna radiata var. radiata (Mung bean).